Here is a 364-residue protein sequence, read N- to C-terminus: Methylthioribose-1-phosphate isomerase (364 aa).

The Proton donor role is filled by aspartate 254.

This sequence belongs to the eIF-2B alpha/beta/delta subunits family. MtnA subfamily.

It is found in the cytoplasm. Its subcellular location is the nucleus. The catalysed reaction is 5-(methylsulfanyl)-alpha-D-ribose 1-phosphate = 5-(methylsulfanyl)-D-ribulose 1-phosphate. The protein operates within amino-acid biosynthesis; L-methionine biosynthesis via salvage pathway; L-methionine from S-methyl-5-thio-alpha-D-ribose 1-phosphate: step 1/6. Catalyzes the interconversion of methylthioribose-1-phosphate (MTR-1-P) into methylthioribulose-1-phosphate (MTRu-1-P). The chain is Methylthioribose-1-phosphate isomerase from Drosophila melanogaster (Fruit fly).